We begin with the raw amino-acid sequence, 210 residues long: Protein SYM1 (210 aa).

A run of 4 helical transmembrane segments spans residues 22–39 (IMTGALFGIGDVSAQLLF), 68–84 (AVVYGSMIFSFIGDRWY), 112–129 (LGFAPLGLPFYFGCMSLL), and 173–189 (LLAANVVAIFWNTFLSY).

Belongs to the peroxisomal membrane protein PXMP2/4 family.

The protein localises to the mitochondrion inner membrane. May be involved in cellular response to stress. Required to maintain mitochondrial DNA (mtDNA) integrity and stability. This chain is Protein SYM1 (SYM1), found in Candida glabrata (strain ATCC 2001 / BCRC 20586 / JCM 3761 / NBRC 0622 / NRRL Y-65 / CBS 138) (Yeast).